The chain runs to 103 residues: UPF0145 protein Dred_2155 (103 aa).

This sequence belongs to the UPF0145 family.

This chain is UPF0145 protein Dred_2155, found in Desulforamulus reducens (strain ATCC BAA-1160 / DSM 100696 / MI-1) (Desulfotomaculum reducens).